A 154-amino-acid polypeptide reads, in one-letter code: Putative F-box protein At2g11200 (154 aa).

Residues 5–51 form the F-box domain; sequence TTAMSDLPRDLEEEVLSRVQLASLRAVRTTCKKWNRRLSKYRFTKKY.

The polypeptide is Putative F-box protein At2g11200 (Arabidopsis thaliana (Mouse-ear cress)).